The following is a 101-amino-acid chain: Small ribosomal subunit protein uS14 (101 aa).

This sequence belongs to the universal ribosomal protein uS14 family. In terms of assembly, part of the 30S ribosomal subunit. Contacts proteins S3 and S10.

Its function is as follows. Binds 16S rRNA, required for the assembly of 30S particles and may also be responsible for determining the conformation of the 16S rRNA at the A site. The sequence is that of Small ribosomal subunit protein uS14 from Pseudoalteromonas translucida (strain TAC 125).